Here is a 489-residue protein sequence, read N- to C-terminus: Ribulose-1,5 bisphosphate carboxylase/oxygenase large subunit N-methyltransferase, chloroplastic (489 aa).

The transit peptide at 1-37 directs the protein to the chloroplast; that stretch reads MATIFSGGSVSPFLFHTNKGTSFTPKAPILHLKRSFS. Residues 64-288 form the SET domain; it reads EGVITAKTPV…AGEQVYIQYD (225 aa). S-adenosyl-L-methionine is bound by residues 80 to 82 and Arg222; that span reads EGL. The substrate site is built by Arg222, Arg226, and Asp239. 242–243 serves as a coordination point for S-adenosyl-L-methionine; it reads NH. The substrate site is built by Tyr254, Tyr287, and Tyr300.

It belongs to the class V-like SAM-binding methyltransferase superfamily. Plant protein-lysine LSMT methyltransferase family. Homotrimer. As to expression, highly expressed in leaf.

The protein resides in the plastid. It localises to the chloroplast. It catalyses the reaction L-lysyl-[ribulose-1,5-bisphosphate carboxylase] + 3 S-adenosyl-L-methionine = N(6),N(6),N(6)-trimethyl-L-lysyl-[ribulose-1,5-bisphosphate carboxylase] + 3 S-adenosyl-L-homocysteine + 3 H(+). It carries out the reaction [fructose-bisphosphate aldolase]-L-lysine + 3 S-adenosyl-L-methionine = [fructose-bisphosphate aldolase]-N(6),N(6),N(6)-trimethyl-L-lysine + 3 S-adenosyl-L-homocysteine + 3 H(+). Its function is as follows. Methylates 'Lys-14' of the large subunit of RuBisCO. Can also use with lower efficiency chloroplastic fructose-bisphosphate aldolases and gamma-tocopherol methyltransferase as substrates, but not a cytosolic aldolase. In Pisum sativum (Garden pea), this protein is Ribulose-1,5 bisphosphate carboxylase/oxygenase large subunit N-methyltransferase, chloroplastic (RBCMT).